The sequence spans 67 residues: Large ribosomal subunit protein bL32 (67 aa).

Basic residues predominate over residues M1–Q19. Residues M1 to A22 are disordered.

It belongs to the bacterial ribosomal protein bL32 family.

This Kineococcus radiotolerans (strain ATCC BAA-149 / DSM 14245 / SRS30216) protein is Large ribosomal subunit protein bL32.